Consider the following 214-residue polypeptide: MADS-box protein SOC1 (214 aa).

The 55-residue stretch at 3–57 folds into the MADS-box domain; sequence RGKTQMKRIENATSRQVTFSKRRNGLLKKAFELSVLCDAEVSLIIFSPKGKLYEF. The 91-residue stretch at 87 to 177 folds into the K-box domain; that stretch reads MQHLKYEAAN…SEKWGSHESE (91 aa). The segment covering 162 to 177 has biased composition (basic and acidic residues); it reads AENEKLSEKWGSHESE. Residues 162-214 are disordered; it reads AENEKLSEKWGSHESEVWSNKNQESTGRGDEESSPSSEVETQLFIGLPCSSRK. Polar residues predominate over residues 178 to 187; sequence VWSNKNQEST.

As to quaternary structure, forms a heterodimer with AGL24 through MADS-box domain. Interacts with AGL15, AGL16 and AGL19. Interacts with OXS3 in the nucleus. Widely expressed. Not found in the apical meristem of short-day grown plants in vegetative stage.

The protein resides in the nucleus. It is found in the cytoplasm. Functionally, transcription activator active in flowering time control. May integrate signals from the photoperiod, vernalization and autonomous floral induction pathways. Can modulate class B and C homeotic genes expression. When associated with AGL24, mediates effect of gibberellins on flowering under short-day conditions, and regulates the expression of LEAFY (LFY), which links floral induction and floral development. The sequence is that of MADS-box protein SOC1 from Arabidopsis thaliana (Mouse-ear cress).